We begin with the raw amino-acid sequence, 200 residues long: HVA22-like protein k (200 aa).

The disordered stretch occupies residues 176–200 (LGEIANGSPVSETNSDSESDSNHED).

The protein belongs to the DP1 family.

In Arabidopsis thaliana (Mouse-ear cress), this protein is HVA22-like protein k (HVA22K).